Consider the following 154-residue polypeptide: RNA-binding protein PAB1135 (154 aa).

As to quaternary structure, homodimer in solution.

Its function is as follows. In vitro, binds efficiently double-stranded RNAs in a non-sequence specific manner. In Pyrococcus abyssi (strain GE5 / Orsay), this protein is RNA-binding protein PAB1135.